Consider the following 176-residue polypeptide: MTETAGELDPEVTPLHLRKALGRFASGVTIVTTAECEDEDSVHGMTANAFTSVSLDPPLVLVSISTRAKMDTKIRETGTYGISILAGDQEPVSLHFAGAAHEPDRVRFVWRRGVPLLEGALVHLACTVVASHPAGDHTLHVGRVEQLWYDDGHPLVFYTGSFRSLELLGRDEPWGF.

Residues 39 to 46 (EDSVHGMT) and 48 to 49 (NA) contribute to the FAD site. Ser-52 provides a ligand contact to NAD(+). FAD-binding positions include 63 to 65 (SIS), 69 to 70 (KM), and 95 to 96 (HF). Residues His-137 and 157–160 (FYTG) contribute to the NAD(+) site.

It belongs to the non-flavoprotein flavin reductase family. As to quaternary structure, homodimer. 4-nitrophenol 2-monooxygenase complex consists of an oxygenase component NphA1 and a flavin reductase component NphA2.

The catalysed reaction is a reduced flavin + NAD(+) = an oxidized flavin + NADH + 2 H(+). Its function is as follows. Catalyzes the reduction of FAD with the concomitant oxidation of NADH. NAD is the physiological electron donor. Subsequently, the reduced flavins diffuse to the oxygenase component NphA2. The polypeptide is NADH-dependent flavin reductase (nphA2) (Rhodococcus sp).